The following is a 706-amino-acid chain: Termination factor NPH-I homolog (706 aa).

One can recognise a Helicase ATP-binding domain in the interval 62 to 227; that stretch reads IGQGENTRGL…VPCFNMLSGR (166 aa). 75–82 provides a ligand contact to ATP; that stretch reads HQMGMGKT. The short motif at 168 to 171 is the DEAH box element; that stretch reads DEAH. The Helicase C-terminal domain occupies 417 to 599; that stretch reads QCLQPLKVLE…HLNSAFRDLL (183 aa).

This sequence belongs to the DEAD box helicase family. DEAH subfamily. Part of the viral DNA-directed RNA polymerase that consists of 8 polII-like subunits (RPB1, RPB2, RPB3, RPB5, RPB6, RPB7, RPB9, RPB10), a capping enzyme and a termination factor.

It is found in the virion. Its function is as follows. Putative DNA-dependent ATPase required for providing the needed energy to achieve the termination of early transcripts. This is Termination factor NPH-I homolog from African swine fever virus (isolate Tick/South Africa/Pretoriuskop Pr4/1996) (ASFV).